The chain runs to 418 residues: MLTKAPRGTKDILPSESYKWQYIEGLIREICDVYGFKEIRTPGFEHTELFLRGVGESTDIVRKEMYTFTDKGGRSITLKAEGTSPAVRAFIEHNLYAETQPTKLYYITPVYRYERPQSGRLREHHQFGVEIFGAKNASADAEVISVAMTLLKKLGLNNLELRINSVGCPVCRKNYNKVLKDFLKDNLEYLCDDCKVRYEINPLRVLDCKVESCQRITKDAPLITDYLCDDCKSHFEELQKYLDIMGYDYIIDPRIVRGLDYYTKTAFEIISKDIGAQGTVCGGGRYDGLIEECGGPSMPGVGFGMGLERLLLTLEQNGIEIPKPEGIDLFIAYVGEEAKLFTFALANKLRFNGLKVERDNMDRSLKAQMKYANKLNAKFAIVIGEEEMKENKVKLKNMRDGSEVEISIDEIEQRIKNI.

This sequence belongs to the class-II aminoacyl-tRNA synthetase family. Homodimer.

The protein resides in the cytoplasm. It catalyses the reaction tRNA(His) + L-histidine + ATP = L-histidyl-tRNA(His) + AMP + diphosphate + H(+). The polypeptide is Histidine--tRNA ligase (Thermoanaerobacter sp. (strain X514)).